The following is a 263-amino-acid chain: Nitrogenase iron protein 2 (263 aa).

Residue 9 to 16 (GKGGIGKS) participates in ATP binding. Cys92 contributes to the [4Fe-4S] cluster binding site. Residue Arg95 is modified to ADP-ribosylarginine; by dinitrogenase reductase ADP-ribosyltransferase. A [4Fe-4S] cluster-binding site is contributed by Cys127.

Belongs to the NifH/BchL/ChlL family. As to quaternary structure, homodimer. The cofactor is [4Fe-4S] cluster. The reversible ADP-ribosylation of Arg-95 inactivates the nitrogenase reductase and regulates nitrogenase activity.

It carries out the reaction N2 + 8 reduced [2Fe-2S]-[ferredoxin] + 16 ATP + 16 H2O = H2 + 8 oxidized [2Fe-2S]-[ferredoxin] + 2 NH4(+) + 16 ADP + 16 phosphate + 6 H(+). The key enzymatic reactions in nitrogen fixation are catalyzed by the nitrogenase complex, which has 2 components: the iron protein and the molybdenum-iron protein. In Methanobacterium ivanovii, this protein is Nitrogenase iron protein 2 (nifH2).